A 26-amino-acid chain; its full sequence is Thrombin-like enzyme LmrSP-3 (26 aa).

This sequence belongs to the peptidase S1 family. Snake venom subfamily. As to expression, expressed by the venom gland.

It is found in the secreted. In terms of biological role, thrombin-like snake venom serine protease that cleaves alpha-chain of fibrinogen (FGA) releases only fibrinopeptide A. Shows coagulant, esterase and amidase activities. The sequence is that of Thrombin-like enzyme LmrSP-3 from Lachesis muta rhombeata (Bushmaster).